A 314-amino-acid polypeptide reads, in one-letter code: Olfactory receptor 10A3 (314 aa).

At 1–25 (MKRQNQSCVVEFILLGFSNFPELQV) the chain is on the extracellular side. N-linked (GlcNAc...) asparagine glycosylation is present at Asn5. The chain crosses the membrane as a helical span at residues 26-46 (QLFGVFLVIYVVTLMGNAIIT). At 47 to 54 (VIISLNQS) the chain is on the cytoplasmic side. A helical membrane pass occupies residues 55 to 75 (LHVPMYLFLLNLSVVEVSFSA). The Extracellular segment spans residues 76-99 (VITPEMLVVLSTEKTMISFVGCFA). A disulfide bridge links Cys97 with Cys189. A helical membrane pass occupies residues 100–120 (QMYFILLFGGTECFLLGAMAY). Topologically, residues 121–139 (DRFAAICHPLNYPVIMNRG) are cytoplasmic. The chain crosses the membrane as a helical span at residues 140-160 (VFMKLVIFSWISGIMVATVQT). At 161 to 197 (TWVFSFPFCGPNEINHLFCETPPVLELVCADTFLFEI) the chain is on the extracellular side. A helical transmembrane segment spans residues 198-217 (YAFTGTILIVMVPFLLILLS). At 218-237 (YIRVLFAILKMPSTTGRQKA) the chain is on the cytoplasmic side. A helical membrane pass occupies residues 238 to 258 (FSTCASHLTSVTLFYGTANMT). Residues 259–271 (YLQPKSGYSPETK) are Extracellular-facing. A helical transmembrane segment spans residues 272-292 (KLISLAYTLLTPLLNPLIYSL). Residues 293–314 (RNSEMKRTLIKLWRRKVILHTF) are Cytoplasmic-facing.

The protein belongs to the G-protein coupled receptor 1 family.

Its subcellular location is the cell membrane. Its function is as follows. Odorant receptor. The polypeptide is Olfactory receptor 10A3 (OR10A3) (Homo sapiens (Human)).